Reading from the N-terminus, the 329-residue chain is Chlorophyllase-1, chloroplastic (329 aa).

The transit peptide at M1–T21 directs the protein to the chloroplast. The GXSXG signature appears at G145–G149. The active-site Nucleophile is S147. Active-site charge relay system residues include D169 and H242.

This sequence belongs to the AB hydrolase superfamily. Lipase family.

The protein resides in the plastid. Its subcellular location is the chloroplast. The enzyme catalyses a chlorophyll + H2O = a chlorophyllide + phytol + H(+). Its pathway is porphyrin-containing compound metabolism; chlorophyll degradation. Functionally, catalyzes the hydrolysis of ester bond in chlorophyll to yield chlorophyllide and phytol. The protein is Chlorophyllase-1, chloroplastic (CHLASE1) of Citrus sinensis (Sweet orange).